Consider the following 181-residue polypeptide: Acireductone dioxygenase (181 aa).

Residues H91, H93, E97, and H136 each coordinate Fe(2+). Residues H91, H93, E97, and H136 each coordinate Ni(2+).

This sequence belongs to the acireductone dioxygenase (ARD) family. Monomer. Interacts with MMP14. Requires Fe(2+) as cofactor. The cofactor is Ni(2+).

It is found in the cytoplasm. The protein resides in the nucleus. The protein localises to the cell membrane. The catalysed reaction is 1,2-dihydroxy-5-(methylsulfanyl)pent-1-en-3-one + O2 = 4-methylsulfanyl-2-oxobutanoate + formate + 2 H(+). The enzyme catalyses 1,2-dihydroxy-5-(methylsulfanyl)pent-1-en-3-one + O2 = 3-(methylsulfanyl)propanoate + CO + formate + 2 H(+). It participates in amino-acid biosynthesis; L-methionine biosynthesis via salvage pathway; L-methionine from S-methyl-5-thio-alpha-D-ribose 1-phosphate: step 5/6. Its function is as follows. Catalyzes 2 different reactions between oxygen and the acireductone 1,2-dihydroxy-3-keto-5-methylthiopentene (DHK-MTPene) depending upon the metal bound in the active site. Fe-containing acireductone dioxygenase (Fe-ARD) produces formate and 2-keto-4-methylthiobutyrate (KMTB), the alpha-ketoacid precursor of methionine in the methionine recycle pathway. Ni-containing acireductone dioxygenase (Ni-ARD) produces methylthiopropionate, carbon monoxide and formate, and does not lie on the methionine recycle pathway. The sequence is that of Acireductone dioxygenase (adi1) from Danio rerio (Zebrafish).